The chain runs to 396 residues: Phosphoglycerate kinase (396 aa).

Substrate is bound by residues 22 to 24 (DFN), arginine 37, 60 to 63 (HFGR), arginine 118, and arginine 151. ATP is bound by residues lysine 201, glutamate 322, and 352-355 (GGDS).

Belongs to the phosphoglycerate kinase family. Monomer.

It is found in the cytoplasm. The enzyme catalyses (2R)-3-phosphoglycerate + ATP = (2R)-3-phospho-glyceroyl phosphate + ADP. It functions in the pathway carbohydrate degradation; glycolysis; pyruvate from D-glyceraldehyde 3-phosphate: step 2/5. The polypeptide is Phosphoglycerate kinase (Wolbachia pipientis subsp. Culex pipiens (strain wPip)).